We begin with the raw amino-acid sequence, 341 residues long: Short chain dehydrogenase virL (341 aa).

NADP(+) is bound by residues leucine 49, lysine 74, aspartate 97, asparagine 123, tyrosine 210, and lysine 214. The Proton donor role is filled by tyrosine 210. Lysine 214 functions as the Lowers pKa of active site Tyr in the catalytic mechanism.

It belongs to the short-chain dehydrogenases/reductases (SDR) family.

Its pathway is secondary metabolite biosynthesis. Short chain dehydrogenase; part of the gene cluster that mediates the biosynthesis of virensols and trichoxide, fungal natural products that contain or are derived from a salicylaldehyde core. The pathway begins with the synthesis of the reduced chain in virensol C by the highly reducing polyketide synthase virA via condensation of one acetate and 8 malonate units. VirA has interesting programming rules since the first 2 ketides are fully reduced, the 3 following ketides undergo beta-dehydration, and the last 3 ketides are only reduced to beta-hydroxys to yield the trihydroxy portion. The production of aldehyde virensol C by virA alone is surprising, since virA does not contain a reductase (R) domain that is typically associated with reductive product release in HRPKS. The cupin-domain enzyme virC is involved in enhancing virA product turnover. The short-chain dehydrogenase virB then oxidizes the C-7 alcohol of virensol C to a ketone, yielding virensol D. Virensol D is further transformed to salicylaldehyde 5-deoxyaurocitrin by the short-chain dehydrogenase virD. VirD catalyzes the dehydrogenation of C-3 to form the beta-ketone aldehyde, which is followed by the generation of the nucleophilic C-2 that is required for the intramolecular aldol condensation between C-2 and C-7, itself followed by dehydration and aromatization which leads to salicylaldehyde 5-deoxyaurocitrin. While the dehydrogenation of virensol D is definitely catalyzed by virD, the aldol condensation and dehydration may be uncatalyzed or assisted by virD. The short chain dehydrogenase virG then converts salicylaldehyde 5-deoxyaurocitrin into virensol B which is further hydroxylated by the cytochrome P450 monooxygenase virE to yield the hydroquinone virensol A. VirI then may oxidize virensol A to form the quinone, while virH performs the epoxidation. Finally, the two remaining short-chain dehydrogenases, virK and virL, are probably responsible for reducing the ketones to the corresponding alcohols to furnish the epoxycyclohexanol structure in trichoxide. This chain is Short chain dehydrogenase virL, found in Hypocrea virens (strain Gv29-8 / FGSC 10586) (Gliocladium virens).